The chain runs to 206 residues: Thymidylate kinase (206 aa).

10 to 17 (GIDGAGKS) lines the ATP pocket.

This sequence belongs to the thymidylate kinase family.

It catalyses the reaction dTMP + ATP = dTDP + ADP. Phosphorylation of dTMP to form dTDP in both de novo and salvage pathways of dTTP synthesis. This chain is Thymidylate kinase, found in Neisseria meningitidis serogroup C / serotype 2a (strain ATCC 700532 / DSM 15464 / FAM18).